Reading from the N-terminus, the 140-residue chain is Nucleoside diphosphate kinase (140 aa).

Positions 11, 59, 87, 93, 104, and 114 each coordinate ATP. Histidine 117 serves as the catalytic Pros-phosphohistidine intermediate.

The protein belongs to the NDK family. As to quaternary structure, homotetramer. Requires Mg(2+) as cofactor.

The protein localises to the cytoplasm. It carries out the reaction a 2'-deoxyribonucleoside 5'-diphosphate + ATP = a 2'-deoxyribonucleoside 5'-triphosphate + ADP. The catalysed reaction is a ribonucleoside 5'-diphosphate + ATP = a ribonucleoside 5'-triphosphate + ADP. Its function is as follows. Major role in the synthesis of nucleoside triphosphates other than ATP. The ATP gamma phosphate is transferred to the NDP beta phosphate via a ping-pong mechanism, using a phosphorylated active-site intermediate. This chain is Nucleoside diphosphate kinase, found in Dinoroseobacter shibae (strain DSM 16493 / NCIMB 14021 / DFL 12).